A 990-amino-acid polypeptide reads, in one-letter code: MSSNTVAEFATELKKSPATLLDQLKAAGVGKAALSDALTESDKQRLLAYLQASHGTTSVDRKKITLVKKSTSEIKQADATGKARTIQVEVRKKRTFVKRDDAQEGAADGAGSAAFAEPEHPAPAAQHDVPEAPAEQAQADAAPAADGAAPALSSEDQELARREEQARHQAELIRRQEAELAAKRAAREAREKREREAEERAAAYAAQEAEKKAAASAVKQVATREQAAEATARNAAQLQARAKAAAESKARSDEEAARAADLDARRRKAEAEAAAIRSMLATPKKAVMVAKKPEPPPKPVPKPAAAAGDAKKGTLHKPAVGATRTAAGAARAGAAAGAPGAGKEVKSAKLSSSWAGDPAKKKEIKTRGDSSGGVGRNNWRGGPRGRRGDSRDQRDEHLQAAPAETRIIEVHVPETITVAEVAHKMSIKASEVIKALMKMGQMVTINQPLDQDTAMIVVEELGHKAVVAALDDPEAFADDDVAQQSIEVLPRAPVVTVMGHVDHGKTSLLDYIRRAKVAASEAGGITQHIGAYHVQTPRGMVSFLDTPGHEAFTAMRARGAQATDIVILVVAADDGVMPQTREAIKHAKAAGVPIVVAITKADKPDANLDRVKQELIGEQVVPEDYGGDSPFVAVSSKTGQGIDALLEHVLLQADVMELKAPVDALAKGLVIEAQLDKGRGPVATVLVQSGTLKVGDVVLAGQTFGRVRAMLDENGRPAKTAGPSIPVEIQGLTEVPQAGDEFMVLTDERRAREIATYRAGRFRNTKLAKQQAAKLEHVFADMTAGEVKMLPIIVKADVQGSQEALAQSLLKLSTDEVKVQLVYAAVGAISESDINLAIASKAVVIGFNVRADAGARKLAEGNGVALHYYSIIYDAVDELRVAMSGMLAPEQREEIIGTAEIRTVFTASKIGTVAGSYITSGMVHRNARFRLLRANVVVHTGEVDSIKRLKDDVREVKEGFECGIKLKNYSDILEGDQLEFFDIKQIARTL.

Residues 92 to 402 (KKRTFVKRDD…QRDEHLQAAP (311 aa)) are disordered. Low complexity-rich tracts occupy residues 104-116 (EGAADGAGSAAFA) and 131-151 (EAPAEQAQADAAPAADGAAPA). Basic and acidic residues predominate over residues 158–201 (ELARREEQARHQAELIRRQEAELAAKRAAREAREKREREAEERA). The span at 223-243 (TREQAAEATARNAAQLQARAK) shows a compositional bias: low complexity. The segment covering 244–264 (AAAESKARSDEEAARAADLDA) has biased composition (basic and acidic residues). Composition is skewed to low complexity over residues 281–290 (ATPKKAVMVA) and 318–342 (PAVGATRTAAGAARAGAAAGAPGAG). Composition is skewed to basic and acidic residues over residues 358–368 (PAKKKEIKTRG) and 386–398 (RRGDSRDQRDEHL). Positions 490–659 (PRAPVVTVMG…LLQADVMELK (170 aa)) constitute a tr-type G domain. Positions 499-506 (GHVDHGKT) are G1. Residue 499–506 (GHVDHGKT) participates in GTP binding. The interval 524-528 (GITQH) is G2. Residues 545–548 (DTPG) are G3. GTP-binding positions include 545–549 (DTPGH) and 599–602 (TKAD). A G4 region spans residues 599 to 602 (TKAD). A G5 region spans residues 635-637 (SSK).

This sequence belongs to the TRAFAC class translation factor GTPase superfamily. Classic translation factor GTPase family. IF-2 subfamily.

The protein resides in the cytoplasm. One of the essential components for the initiation of protein synthesis. Protects formylmethionyl-tRNA from spontaneous hydrolysis and promotes its binding to the 30S ribosomal subunits. Also involved in the hydrolysis of GTP during the formation of the 70S ribosomal complex. The protein is Translation initiation factor IF-2 of Verminephrobacter eiseniae (strain EF01-2).